The primary structure comprises 941 residues: Protein translocase subunit SecA (941 aa).

ATP is bound by residues glutamine 87, glycine 105 to threonine 109, and aspartate 524. Residues aspartate 871–valine 919 are disordered. 4 residues coordinate Zn(2+): cysteine 925, cysteine 927, cysteine 936, and histidine 937.

It belongs to the SecA family. As to quaternary structure, monomer and homodimer. Part of the essential Sec protein translocation apparatus which comprises SecA, SecYEG and auxiliary proteins SecDF-YajC and YidC. Zn(2+) serves as cofactor.

The protein localises to the cell inner membrane. Its subcellular location is the cytoplasm. The enzyme catalyses ATP + H2O + cellular proteinSide 1 = ADP + phosphate + cellular proteinSide 2.. Its function is as follows. Part of the Sec protein translocase complex. Interacts with the SecYEG preprotein conducting channel. Has a central role in coupling the hydrolysis of ATP to the transfer of proteins into and across the cell membrane, serving both as a receptor for the preprotein-SecB complex and as an ATP-driven molecular motor driving the stepwise translocation of polypeptide chains across the membrane. This Afipia carboxidovorans (strain ATCC 49405 / DSM 1227 / KCTC 32145 / OM5) (Oligotropha carboxidovorans) protein is Protein translocase subunit SecA.